A 142-amino-acid polypeptide reads, in one-letter code: Large ribosomal subunit protein uL13 (142 aa).

Belongs to the universal ribosomal protein uL13 family. Part of the 50S ribosomal subunit.

In terms of biological role, this protein is one of the early assembly proteins of the 50S ribosomal subunit, although it is not seen to bind rRNA by itself. It is important during the early stages of 50S assembly. This chain is Large ribosomal subunit protein uL13, found in Dictyoglomus thermophilum (strain ATCC 35947 / DSM 3960 / H-6-12).